The sequence spans 241 residues: Small ribosomal subunit protein uS3 (241 aa).

A KH type-2 domain is found at 22–91; it reads VDEYLAYKFH…NPQVTVVKVE (70 aa). Residues 218–241 form a disordered region; it reads EMQQTQPEAPTLEETVEQSGGETQ.

Belongs to the universal ribosomal protein uS3 family. Part of the 30S ribosomal subunit.

In terms of biological role, binds the lower part of the 30S subunit head. This chain is Small ribosomal subunit protein uS3, found in Ignicoccus hospitalis (strain KIN4/I / DSM 18386 / JCM 14125).